Here is a 218-residue protein sequence, read N- to C-terminus: GTP cyclohydrolase 1 (218 aa).

Zn(2+)-binding residues include Cys-109, His-112, and Cys-180.

This sequence belongs to the GTP cyclohydrolase I family. In terms of assembly, toroid-shaped homodecamer, composed of two pentamers of five dimers.

The enzyme catalyses GTP + H2O = 7,8-dihydroneopterin 3'-triphosphate + formate + H(+). It participates in cofactor biosynthesis; 7,8-dihydroneopterin triphosphate biosynthesis; 7,8-dihydroneopterin triphosphate from GTP: step 1/1. The polypeptide is GTP cyclohydrolase 1 (Actinobacillus pleuropneumoniae serotype 5b (strain L20)).